The chain runs to 333 residues: GTPase Obg (333 aa).

The Obg domain maps to 1-159 (MKFIDQTIIQ…RDIQLELILI (159 aa)). Residues 160-332 (ADVGTLGMPN…LCSDIAFYLQ (173 aa)) form the OBG-type G domain. Residues 166-173 (GMPNAGKS), 191-195 (FTTLN), 212-215 (DIPG), 282-285 (NKID), and 313-315 (SSI) contribute to the GTP site. 2 residues coordinate Mg(2+): S173 and T193.

The protein belongs to the TRAFAC class OBG-HflX-like GTPase superfamily. OBG GTPase family. In terms of assembly, monomer. Mg(2+) is required as a cofactor.

It is found in the cytoplasm. Its function is as follows. An essential GTPase which binds GTP, GDP and possibly (p)ppGpp with moderate affinity, with high nucleotide exchange rates and a fairly low GTP hydrolysis rate. Plays a role in control of the cell cycle, stress response, ribosome biogenesis and in those bacteria that undergo differentiation, in morphogenesis control. The protein is GTPase Obg of Buchnera aphidicola subsp. Schizaphis graminum (strain Sg).